Consider the following 71-residue polypeptide: ATP synthase subunit c 1 (71 aa).

Transmembrane regions (helical) follow at residues 4-24 (FIGA…VGHV) and 46-66 (LFVG…IALL).

Belongs to the ATPase C chain family. F-type ATPases have 2 components, F(1) - the catalytic core - and F(0) - the membrane proton channel. F(1) has five subunits: alpha(3), beta(3), gamma(1), delta(1), epsilon(1). F(0) has four main subunits: a(1), b(1), b'(1) and c(10-14). The alpha and beta chains form an alternating ring which encloses part of the gamma chain. F(1) is attached to F(0) by a central stalk formed by the gamma and epsilon chains, while a peripheral stalk is formed by the delta, b and b' chains.

It is found in the cell inner membrane. F(1)F(0) ATP synthase produces ATP from ADP in the presence of a proton or sodium gradient. F-type ATPases consist of two structural domains, F(1) containing the extramembraneous catalytic core and F(0) containing the membrane proton channel, linked together by a central stalk and a peripheral stalk. During catalysis, ATP synthesis in the catalytic domain of F(1) is coupled via a rotary mechanism of the central stalk subunits to proton translocation. Its function is as follows. Key component of the F(0) channel; it plays a direct role in translocation across the membrane. A homomeric c-ring of between 10-14 subunits forms the central stalk rotor element with the F(1) delta and epsilon subunits. The sequence is that of ATP synthase subunit c 1 from Cereibacter sphaeroides (strain ATCC 17029 / ATH 2.4.9) (Rhodobacter sphaeroides).